The primary structure comprises 311 residues: Ferritin-like catalase Nec2 (311 aa).

The signal sequence occupies residues 1-25 (MAFLSNMAMFITMLMFSSMMHPCFS). 3 N-linked (GlcNAc...) asparagine glycosylation sites follow: Asn-128, Asn-257, and Asn-289.

In terms of assembly, forms homomultimers. As to expression, observed in all flowers organs; mainly expressed in nectaries and, to a lower extent, in petals and ovules, as well as in stigmas and calyx at low levels.

It catalyses the reaction 2 H2O2 = O2 + 2 H2O. In terms of biological role, involved in the production of blood-red nectar containing the alkaloid nesocodin and that serves as a visual attractant for pollinator visitation, including vertebrates such as Phelsuma geckos. The nectar is initially acidic and pale yellow, but slowly becomes alkaline before turning into red within 24 hours. Together with NEC1 and NEC3, facilitates the condensation of sinapaldehyde ((E)-3,5-dimethoxy-4-hydroxycinnamaldehyde) and proline to form nesocodin, a pigment with a stable imine bond. Protects nesocodin from degradation by hydrogen peroxide H(2)O(2) by catalyzing the degradation of H(2)O(2) into water H(2)O and dioxygene O(2). This Nesocodon mauritianus (Blue Mauritius bellflower) protein is Ferritin-like catalase Nec2.